Here is a 78-residue protein sequence, read N- to C-terminus: Acyl carrier protein (78 aa).

The Carrier domain occupies 2–77; the sequence is SDIAERVKKI…DAIKYIGENM (76 aa). O-(pantetheine 4'-phosphoryl)serine is present on serine 37.

It belongs to the acyl carrier protein (ACP) family. In terms of processing, 4'-phosphopantetheine is transferred from CoA to a specific serine of apo-ACP by AcpS. This modification is essential for activity because fatty acids are bound in thioester linkage to the sulfhydryl of the prosthetic group.

It is found in the cytoplasm. Its pathway is lipid metabolism; fatty acid biosynthesis. Functionally, carrier of the growing fatty acid chain in fatty acid biosynthesis. The chain is Acyl carrier protein from Magnetococcus marinus (strain ATCC BAA-1437 / JCM 17883 / MC-1).